Reading from the N-terminus, the 223-residue chain is Deoxyribose-phosphate aldolase (223 aa).

Asp-89 acts as the Proton donor/acceptor in catalysis. Lys-152 functions as the Schiff-base intermediate with acetaldehyde in the catalytic mechanism. Lys-181 acts as the Proton donor/acceptor in catalysis.

Belongs to the DeoC/FbaB aldolase family. DeoC type 1 subfamily.

It is found in the cytoplasm. The catalysed reaction is 2-deoxy-D-ribose 5-phosphate = D-glyceraldehyde 3-phosphate + acetaldehyde. It participates in carbohydrate degradation; 2-deoxy-D-ribose 1-phosphate degradation; D-glyceraldehyde 3-phosphate and acetaldehyde from 2-deoxy-alpha-D-ribose 1-phosphate: step 2/2. Catalyzes a reversible aldol reaction between acetaldehyde and D-glyceraldehyde 3-phosphate to generate 2-deoxy-D-ribose 5-phosphate. The polypeptide is Deoxyribose-phosphate aldolase (Listeria monocytogenes serotype 4b (strain CLIP80459)).